The following is a 156-amino-acid chain: ATP synthase subunit b (156 aa).

A helical membrane pass occupies residues 12 to 32 (VAFLIFVLFCMKFVWPPVIAA).

Belongs to the ATPase B chain family. F-type ATPases have 2 components, F(1) - the catalytic core - and F(0) - the membrane proton channel. F(1) has five subunits: alpha(3), beta(3), gamma(1), delta(1), epsilon(1). F(0) has three main subunits: a(1), b(2) and c(10-14). The alpha and beta chains form an alternating ring which encloses part of the gamma chain. F(1) is attached to F(0) by a central stalk formed by the gamma and epsilon chains, while a peripheral stalk is formed by the delta and b chains.

It is found in the cell inner membrane. Functionally, f(1)F(0) ATP synthase produces ATP from ADP in the presence of a proton or sodium gradient. F-type ATPases consist of two structural domains, F(1) containing the extramembraneous catalytic core and F(0) containing the membrane proton channel, linked together by a central stalk and a peripheral stalk. During catalysis, ATP synthesis in the catalytic domain of F(1) is coupled via a rotary mechanism of the central stalk subunits to proton translocation. Component of the F(0) channel, it forms part of the peripheral stalk, linking F(1) to F(0). This is ATP synthase subunit b from Pseudomonas fluorescens (strain Pf0-1).